The chain runs to 226 residues: Probable N-acetyl-alpha-D-glucosaminyl L-malate deacetylase 2 (226 aa).

Positions 13, 16, and 127 each coordinate Zn(2+).

Belongs to the PIGL family. Requires Zn(2+) as cofactor.

The catalysed reaction is (S)-malyl N-acetyl-alpha-D-glucosaminide + H2O = (S)-malyl alpha-D-glucosaminide + acetate. In terms of biological role, involved in bacillithiol (BSH) biosynthesis. Catalyzes the second step of the pathway, the deacetylation of N-acetylglucosaminylmalate (GlcNAc-Mal) to glucosamine malate (GlcN-Mal). Could also be involved in bacillithiol-detoxifying pathways through formation of S-mercapturic adducts. The chain is Probable N-acetyl-alpha-D-glucosaminyl L-malate deacetylase 2 from Bacillus anthracis.